We begin with the raw amino-acid sequence, 390 residues long: Putative RING-H2 finger protein ATL12 (390 aa).

The signal sequence occupies residues 1 to 22 (MNSPQEISILFFFIIFLDYVSA). A helical transmembrane segment spans residues 41–61 (LAIITGVFSIVFTLTFVLLVY). Residues 124–166 (CSVCLSKFEDVEILRLLPKCRHAFHIGCIDQWLEQHATCPLCR) form an RING-type; atypical zinc finger.

The protein belongs to the RING-type zinc finger family. ATL subfamily.

Its subcellular location is the membrane. It catalyses the reaction S-ubiquitinyl-[E2 ubiquitin-conjugating enzyme]-L-cysteine + [acceptor protein]-L-lysine = [E2 ubiquitin-conjugating enzyme]-L-cysteine + N(6)-ubiquitinyl-[acceptor protein]-L-lysine.. The protein operates within protein modification; protein ubiquitination. The chain is Putative RING-H2 finger protein ATL12 (ATL12) from Arabidopsis thaliana (Mouse-ear cress).